Consider the following 215-residue polypeptide: Cytochrome b6 (215 aa).

The chain crosses the membrane as a helical span at residues 32–52 (IFYCLGGITLTCFLVQVASGF). Position 35 (Cys35) interacts with heme c. Positions 86 and 100 each coordinate heme b. 3 consecutive transmembrane segments (helical) span residues 90-110 (ASMM…TGGF), 116-136 (LTWV…VTGY), and 186-206 (LHTF…FLMI). Residues His187 and His202 each coordinate heme b.

The protein belongs to the cytochrome b family. PetB subfamily. The 4 large subunits of the cytochrome b6-f complex are cytochrome b6, subunit IV (17 kDa polypeptide, PetD), cytochrome f and the Rieske protein, while the 4 small subunits are PetG, PetL, PetM and PetN. The complex functions as a dimer. Heme b serves as cofactor. It depends on heme c as a cofactor.

The protein localises to the plastid. The protein resides in the chloroplast thylakoid membrane. Its function is as follows. Component of the cytochrome b6-f complex, which mediates electron transfer between photosystem II (PSII) and photosystem I (PSI), cyclic electron flow around PSI, and state transitions. The polypeptide is Cytochrome b6 (Anthoceros angustus (Hornwort)).